The following is a 227-amino-acid chain: Cytochrome c oxidase subunit 2 (227 aa).

The Mitochondrial intermembrane segment spans residues 1 to 14; it reads MAYPAQMGFQDATS. A helical membrane pass occupies residues 15 to 45; that stretch reads PIMEELLYFHDHTLMIVFMISSLVLYTISLM. The Mitochondrial matrix portion of the chain corresponds to 46–59; sequence LTTSLTHTNTMNAQ. Residues 60–87 form a helical membrane-spanning segment; the sequence is EVETVWTILPAIICILIALPSLRILYMM. The Mitochondrial intermembrane segment spans residues 88-227; the sequence is DEINNPSLTI…YFEKWLLTML (140 aa). The Cu cation site is built by His161, Cys196, Glu198, Cys200, His204, and Met207. Residue Glu198 participates in Mg(2+) binding. At Tyr218 the chain carries Phosphotyrosine.

This sequence belongs to the cytochrome c oxidase subunit 2 family. As to quaternary structure, component of the cytochrome c oxidase (complex IV, CIV), a multisubunit enzyme composed of 14 subunits. The complex is composed of a catalytic core of 3 subunits MT-CO1, MT-CO2 and MT-CO3, encoded in the mitochondrial DNA, and 11 supernumerary subunits COX4I, COX5A, COX5B, COX6A, COX6B, COX6C, COX7A, COX7B, COX7C, COX8 and NDUFA4, which are encoded in the nuclear genome. The complex exists as a monomer or a dimer and forms supercomplexes (SCs) in the inner mitochondrial membrane with NADH-ubiquinone oxidoreductase (complex I, CI) and ubiquinol-cytochrome c oxidoreductase (cytochrome b-c1 complex, complex III, CIII), resulting in different assemblies (supercomplex SCI(1)III(2)IV(1) and megacomplex MCI(2)III(2)IV(2)). Found in a complex with TMEM177, COA6, COX18, COX20, SCO1 and SCO2. Interacts with TMEM177 in a COX20-dependent manner. Interacts with COX20. Interacts with COX16. Cu cation serves as cofactor.

The protein resides in the mitochondrion inner membrane. The catalysed reaction is 4 Fe(II)-[cytochrome c] + O2 + 8 H(+)(in) = 4 Fe(III)-[cytochrome c] + 2 H2O + 4 H(+)(out). In terms of biological role, component of the cytochrome c oxidase, the last enzyme in the mitochondrial electron transport chain which drives oxidative phosphorylation. The respiratory chain contains 3 multisubunit complexes succinate dehydrogenase (complex II, CII), ubiquinol-cytochrome c oxidoreductase (cytochrome b-c1 complex, complex III, CIII) and cytochrome c oxidase (complex IV, CIV), that cooperate to transfer electrons derived from NADH and succinate to molecular oxygen, creating an electrochemical gradient over the inner membrane that drives transmembrane transport and the ATP synthase. Cytochrome c oxidase is the component of the respiratory chain that catalyzes the reduction of oxygen to water. Electrons originating from reduced cytochrome c in the intermembrane space (IMS) are transferred via the dinuclear copper A center (CU(A)) of subunit 2 and heme A of subunit 1 to the active site in subunit 1, a binuclear center (BNC) formed by heme A3 and copper B (CU(B)). The BNC reduces molecular oxygen to 2 water molecules using 4 electrons from cytochrome c in the IMS and 4 protons from the mitochondrial matrix. The sequence is that of Cytochrome c oxidase subunit 2 (MT-CO2) from Daubentonia madagascariensis (Aye-aye).